Consider the following 566-residue polypeptide: Mitochondrial distribution and morphology protein 34 (566 aa).

Residues 1–195 enclose the SMP-LTD domain; that stretch reads MAFNFNWSPL…LPAIIHRLSL (195 aa). Disordered regions lie at residues 212–237, 349–401, 432–518, and 539–566; these read PEQT…DSLG, GYGL…NPSV, PERR…SSST, and KLMP…AYGQ. Positions 358–370 are enriched in basic residues; that stretch reads RHSKAHSRKRKKR. Over residues 380 to 401 the composition is skewed to polar residues; the sequence is TSDTASVSDESAYTETASNPSV. Residues 444-454 show a composition bias toward basic and acidic residues; it reads PRRDIATEMLR.

The protein belongs to the MDM34 family. In terms of assembly, component of the ER-mitochondria encounter structure (ERMES) or MDM complex, composed of mmm1, mdm10, mdm12 and mdm34.

It is found in the mitochondrion outer membrane. Its function is as follows. Component of the ERMES/MDM complex, which serves as a molecular tether to connect the endoplasmic reticulum (ER) and mitochondria. Components of this complex are involved in the control of mitochondrial shape and protein biogenesis, and function in nonvesicular lipid trafficking between the ER and mitochondria. Mdm34 is required for the interaction of the ER-resident membrane protein mmm1 and the outer mitochondrial membrane-resident beta-barrel protein mdm10. This is Mitochondrial distribution and morphology protein 34 from Aspergillus flavus (strain ATCC 200026 / FGSC A1120 / IAM 13836 / NRRL 3357 / JCM 12722 / SRRC 167).